The sequence spans 505 residues: ATP synthase subunit alpha (505 aa).

171–178 (GDRQTGKT) provides a ligand contact to ATP.

Belongs to the ATPase alpha/beta chains family. In terms of assembly, F-type ATPases have 2 components, CF(1) - the catalytic core - and CF(0) - the membrane proton channel. CF(1) has five subunits: alpha(3), beta(3), gamma(1), delta(1), epsilon(1). CF(0) has three main subunits: a(1), b(2) and c(9-12). The alpha and beta chains form an alternating ring which encloses part of the gamma chain. CF(1) is attached to CF(0) by a central stalk formed by the gamma and epsilon chains, while a peripheral stalk is formed by the delta and b chains.

Its subcellular location is the cell inner membrane. It catalyses the reaction ATP + H2O + 4 H(+)(in) = ADP + phosphate + 5 H(+)(out). Produces ATP from ADP in the presence of a proton gradient across the membrane. The alpha chain is a regulatory subunit. In Aliarcobacter butzleri (strain RM4018) (Arcobacter butzleri), this protein is ATP synthase subunit alpha.